We begin with the raw amino-acid sequence, 180 residues long: Ribulose bisphosphate carboxylase small subunit, chloroplastic 4 (180 aa).

A chloroplast-targeting transit peptide spans 1–56 (MASSIVSSAAVATRANGAQASMVGPFTGLKSTASFPVSRKQNLDITSIASNGGRVR).

This sequence belongs to the RuBisCO small chain family. Heterohexadecamer of 8 large and 8 small subunits.

The protein resides in the plastid. The protein localises to the chloroplast. In terms of biological role, ruBisCO catalyzes two reactions: the carboxylation of D-ribulose 1,5-bisphosphate, the primary event in carbon dioxide fixation, as well as the oxidative fragmentation of the pentose substrate. Both reactions occur simultaneously and in competition at the same active site. Although the small subunit is not catalytic it is essential for maximal activity. The sequence is that of Ribulose bisphosphate carboxylase small subunit, chloroplastic 4 from Solanum tuberosum (Potato).